The primary structure comprises 115 residues: Large ribosomal subunit protein bL20 (115 aa).

It belongs to the bacterial ribosomal protein bL20 family.

Its function is as follows. Binds directly to 23S ribosomal RNA and is necessary for the in vitro assembly process of the 50S ribosomal subunit. It is not involved in the protein synthesizing functions of that subunit. The chain is Large ribosomal subunit protein bL20 from Salinibacter ruber (strain DSM 13855 / M31).